We begin with the raw amino-acid sequence, 221 residues long: Thiamine-phosphate synthase (221 aa).

Residues Gln44 to Lys48 and Asn80 contribute to the 4-amino-2-methyl-5-(diphosphooxymethyl)pyrimidine site. Positions 81 and 100 each coordinate Mg(2+). Thr119 is a binding site for 4-amino-2-methyl-5-(diphosphooxymethyl)pyrimidine. Thr146–Thr148 is a 2-[(2R,5Z)-2-carboxy-4-methylthiazol-5(2H)-ylidene]ethyl phosphate binding site. Lys149 lines the 4-amino-2-methyl-5-(diphosphooxymethyl)pyrimidine pocket. A 2-[(2R,5Z)-2-carboxy-4-methylthiazol-5(2H)-ylidene]ethyl phosphate-binding site is contributed by Gly176.

The protein belongs to the thiamine-phosphate synthase family. Mg(2+) is required as a cofactor.

The enzyme catalyses 2-[(2R,5Z)-2-carboxy-4-methylthiazol-5(2H)-ylidene]ethyl phosphate + 4-amino-2-methyl-5-(diphosphooxymethyl)pyrimidine + 2 H(+) = thiamine phosphate + CO2 + diphosphate. The catalysed reaction is 2-(2-carboxy-4-methylthiazol-5-yl)ethyl phosphate + 4-amino-2-methyl-5-(diphosphooxymethyl)pyrimidine + 2 H(+) = thiamine phosphate + CO2 + diphosphate. It carries out the reaction 4-methyl-5-(2-phosphooxyethyl)-thiazole + 4-amino-2-methyl-5-(diphosphooxymethyl)pyrimidine + H(+) = thiamine phosphate + diphosphate. Its pathway is cofactor biosynthesis; thiamine diphosphate biosynthesis; thiamine phosphate from 4-amino-2-methyl-5-diphosphomethylpyrimidine and 4-methyl-5-(2-phosphoethyl)-thiazole: step 1/1. Its function is as follows. Condenses 4-methyl-5-(beta-hydroxyethyl)thiazole monophosphate (THZ-P) and 2-methyl-4-amino-5-hydroxymethyl pyrimidine pyrophosphate (HMP-PP) to form thiamine monophosphate (TMP). The chain is Thiamine-phosphate synthase from Hyphomonas neptunium (strain ATCC 15444).